The chain runs to 123 residues: MEYSTFGKHIIVDLWGVDFSLLDDMYFLEHHLVHAADLSGAHVLNVSTKEFDPHGVTVLVLLSESHLSIHTYPEKNFAAIDCYTCGTTVEPQIAIDYIVSILKPNEMHIKKLIRGIGEIVNTD.

Ser-65 functions as the Schiff-base intermediate with substrate; via pyruvic acid in the catalytic mechanism. Position 65 is a pyruvic acid (Ser); by autocatalysis (Ser-65). His-70 acts as the Proton acceptor; for processing activity in catalysis. Cys-85 acts as the Proton donor; for catalytic activity in catalysis.

The protein belongs to the prokaryotic AdoMetDC family. Type 1 subfamily. In terms of assembly, heterotetramer of two alpha and two beta chains arranged as a dimer of alpha/beta heterodimers. The cofactor is pyruvate. Post-translationally, is synthesized initially as an inactive proenzyme. Formation of the active enzyme involves a self-maturation process in which the active site pyruvoyl group is generated from an internal serine residue via an autocatalytic post-translational modification. Two non-identical subunits are generated from the proenzyme in this reaction, and the pyruvate is formed at the N-terminus of the alpha chain, which is derived from the carboxyl end of the proenzyme. The post-translation cleavage follows an unusual pathway, termed non-hydrolytic serinolysis, in which the side chain hydroxyl group of the serine supplies its oxygen atom to form the C-terminus of the beta chain, while the remainder of the serine residue undergoes an oxidative deamination to produce ammonia and the pyruvoyl group blocking the N-terminus of the alpha chain.

It catalyses the reaction S-adenosyl-L-methionine + H(+) = S-adenosyl 3-(methylsulfanyl)propylamine + CO2. The protein operates within amine and polyamine biosynthesis; S-adenosylmethioninamine biosynthesis; S-adenosylmethioninamine from S-adenosyl-L-methionine: step 1/1. In terms of biological role, catalyzes the decarboxylation of S-adenosylmethionine to S-adenosylmethioninamine (dcAdoMet), the propylamine donor required for the synthesis of the polyamines spermine and spermidine from the diamine putrescine. This Bacillus cereus (strain ZK / E33L) protein is S-adenosylmethionine decarboxylase proenzyme 2.